A 280-amino-acid chain; its full sequence is Hemin import ATP-binding protein HmuV (280 aa).

Positions 26 to 260 (LAAAGGLRVH…GLLSEVYDQP (235 aa)) constitute an ABC transporter domain. 59–66 (GPNGAGKS) contributes to the ATP binding site.

The protein belongs to the ABC transporter superfamily. Heme (hemin) importer (TC 3.A.1.14.5) family. In terms of assembly, the complex is composed of two ATP-binding proteins (HmuV), two transmembrane proteins (HmuU) and a solute-binding protein (HmuT).

The protein resides in the cell membrane. Part of the ABC transporter complex HmuTUV involved in hemin import. Responsible for energy coupling to the transport system. The protein is Hemin import ATP-binding protein HmuV of Streptomyces coelicolor (strain ATCC BAA-471 / A3(2) / M145).